The following is a 133-amino-acid chain: Probable mitochondrial pyruvate carrier 2 (133 aa).

Helical transmembrane passes span 40 to 57 (VFFWAPTIKWTLIGAGLA), 73 to 91 (ALFATGAIWTRYCLVITPI), and 100 to 116 (FFVMCTGLAQLCRIAHY).

The protein belongs to the mitochondrial pyruvate carrier (MPC) (TC 2.A.105) family.

The protein localises to the mitochondrion inner membrane. In terms of biological role, may mediate the uptake of pyruvate into mitochondria. In Caenorhabditis elegans, this protein is Probable mitochondrial pyruvate carrier 2.